Reading from the N-terminus, the 274-residue chain is NADPH-dependent 7-cyano-7-deazaguanine reductase (274 aa).

Position 80–82 (80–82) interacts with substrate; sequence VES. NADPH is bound at residue 82–83; it reads SK. Residue Cys181 is the Thioimide intermediate of the active site. Residue Asp188 is the Proton donor of the active site. 220-221 contacts substrate; that stretch reads HE. 249–250 is a binding site for NADPH; the sequence is RG.

The protein belongs to the GTP cyclohydrolase I family. QueF type 2 subfamily. In terms of assembly, homodimer.

It localises to the cytoplasm. The catalysed reaction is 7-aminomethyl-7-carbaguanine + 2 NADP(+) = 7-cyano-7-deazaguanine + 2 NADPH + 3 H(+). The protein operates within tRNA modification; tRNA-queuosine biosynthesis. Catalyzes the NADPH-dependent reduction of 7-cyano-7-deazaguanine (preQ0) to 7-aminomethyl-7-deazaguanine (preQ1). This is NADPH-dependent 7-cyano-7-deazaguanine reductase from Paraburkholderia phytofirmans (strain DSM 17436 / LMG 22146 / PsJN) (Burkholderia phytofirmans).